Here is a 60-residue protein sequence, read N- to C-terminus: Large ribosomal subunit protein uL30 (60 aa).

The protein belongs to the universal ribosomal protein uL30 family. As to quaternary structure, part of the 50S ribosomal subunit.

This Finegoldia magna (strain ATCC 29328 / DSM 20472 / WAL 2508) (Peptostreptococcus magnus) protein is Large ribosomal subunit protein uL30.